A 485-amino-acid polypeptide reads, in one-letter code: Glutamyl-tRNA(Gln) amidotransferase subunit A (485 aa).

Residues Lys79 and Ser154 each act as charge relay system in the active site. Ser178 (acyl-ester intermediate) is an active-site residue.

The protein belongs to the amidase family. GatA subfamily. As to quaternary structure, heterotrimer of A, B and C subunits.

It catalyses the reaction L-glutamyl-tRNA(Gln) + L-glutamine + ATP + H2O = L-glutaminyl-tRNA(Gln) + L-glutamate + ADP + phosphate + H(+). In terms of biological role, allows the formation of correctly charged Gln-tRNA(Gln) through the transamidation of misacylated Glu-tRNA(Gln) in organisms which lack glutaminyl-tRNA synthetase. The reaction takes place in the presence of glutamine and ATP through an activated gamma-phospho-Glu-tRNA(Gln). The polypeptide is Glutamyl-tRNA(Gln) amidotransferase subunit A (Staphylococcus aureus (strain USA300 / TCH1516)).